Here is a 206-residue protein sequence, read N- to C-terminus: Na(+)-translocating NADH-quinone reductase subunit E (206 aa).

6 helical membrane-spanning segments follow: residues 12 to 32, 36 to 56, 85 to 105, 118 to 138, 148 to 168, and 184 to 204; these read AVFVENMALAFFLGMCTFIAI, IQTAIGLGIAVVVVLAITVPV, FLGLLSYIGVIAAIVQILEMT, GIFLPLITVNCAIMGASLFMV, VVYGVGAGVGWALAITLLAGI, and LGITFITVGLMSLGFMSFSGV.

This sequence belongs to the NqrDE/RnfAE family. As to quaternary structure, composed of six subunits; NqrA, NqrB, NqrC, NqrD, NqrE and NqrF.

It is found in the cell inner membrane. It carries out the reaction a ubiquinone + n Na(+)(in) + NADH + H(+) = a ubiquinol + n Na(+)(out) + NAD(+). Its function is as follows. NQR complex catalyzes the reduction of ubiquinone-1 to ubiquinol by two successive reactions, coupled with the transport of Na(+) ions from the cytoplasm to the periplasm. NqrA to NqrE are probably involved in the second step, the conversion of ubisemiquinone to ubiquinol. The protein is Na(+)-translocating NADH-quinone reductase subunit E of Alcanivorax borkumensis (strain ATCC 700651 / DSM 11573 / NCIMB 13689 / SK2).